A 360-amino-acid chain; its full sequence is Phospho-N-acetylmuramoyl-pentapeptide-transferase (360 aa).

10 helical membrane-spanning segments follow: residues 21–41, 73–93, 94–114, 132–152, 168–188, 199–219, 239–259, 263–283, 288–308, and 338–358; these read YLSFRAIVSILTALGISLWMG, TMGGVMILAAITITVLLWADL, TNPYVWAVLAVLLGYGAVGFV, WKYFWQSAIALVVAFALYAHG, VMPQLGLMYIVLTYFVIVGTS, GLAIMPTVLVAAGFAAIAWAT, LVVVCTAMVGAGLGFLWFNTY, VFMGDVGALALGGALGTIAVL, FVLVIMGGVFVMETLSVILQV, and VIVRFWVISIVLVLIGLATLK.

It belongs to the glycosyltransferase 4 family. MraY subfamily. Mg(2+) is required as a cofactor.

The protein resides in the cell inner membrane. The enzyme catalyses UDP-N-acetyl-alpha-D-muramoyl-L-alanyl-gamma-D-glutamyl-meso-2,6-diaminopimeloyl-D-alanyl-D-alanine + di-trans,octa-cis-undecaprenyl phosphate = di-trans,octa-cis-undecaprenyl diphospho-N-acetyl-alpha-D-muramoyl-L-alanyl-D-glutamyl-meso-2,6-diaminopimeloyl-D-alanyl-D-alanine + UMP. It functions in the pathway cell wall biogenesis; peptidoglycan biosynthesis. Functionally, catalyzes the initial step of the lipid cycle reactions in the biosynthesis of the cell wall peptidoglycan: transfers peptidoglycan precursor phospho-MurNAc-pentapeptide from UDP-MurNAc-pentapeptide onto the lipid carrier undecaprenyl phosphate, yielding undecaprenyl-pyrophosphoryl-MurNAc-pentapeptide, known as lipid I. In Vibrio cholerae serotype O1 (strain ATCC 39541 / Classical Ogawa 395 / O395), this protein is Phospho-N-acetylmuramoyl-pentapeptide-transferase.